Consider the following 158-residue polypeptide: Scytalone dehydratase-like protein CPUR_05428 (158 aa).

Substrate-binding residues include tyrosine 24 and tyrosine 44. Catalysis depends on residues histidine 79 and histidine 104.

This sequence belongs to the scytalone dehydratase family.

It functions in the pathway pigment biosynthesis. Its function is as follows. Scytalone dehydratase-like protein; part of the ergochrome gene cluster responsible for the typical purple-black color of the ergot sclerotia. The ergochrome gene cluster produces several ergot pigments including the yellow ergochrome secalonic acid and its derivatives, as well as the red anthraquinones endocrocin and clavorubin. The pathway begins with the synthesis of atrochrysone thioester by the polyketide synthase (PKS) CPUR_05437. The atrochrysone carboxyl ACP thioesterase CPUR_05436 then breaks the thioester bond and releases the atrochrysone carboxylic acid from CPUR_05437. The atrochrysone carboxylic acid is then converted to atrochrysone which is further transformed into emodin anthrone. The next step is performed by the anthrone oxygenase CPUR_05434 that catalyzes the oxidation of emodinanthrone to emodin. Emodin is further modified to yield monodictyphenone via several steps involving CPUR_05427, CPUR_05428, CPUR_05429 and CPUR_05430. The short chain dehydrogenase/reductase CPUR_05418 then catalyzes the C-5 ketoreduction to give the xanthone skeleton of the monomeric units. Ergochromes formation requires further dimerization steps of different xanthone units, probably catalyzed by the cytochrome P450 monooxygenase CPUR_05419. CPUR_05425, CPUR_05426 and CPUR_05431 are unique to Claviceps, thus it is likely that they are involved in further modification of xanthone units or in their dimerization. The yellow ergochromes and the red anthraquinone pigments endocrocin and clavorubin are products from the same PKS derived precursors and the latter are likely shunt products in the pathway of xanthone biosynthesis. It is proposed that atrochrysone carboxylic acid released from the PKS CPUR_05437 can also be converted to endocrocin anthrone which is further oxidized into endocrocin by CPUR_05435. Endocrocin could be then modified to clavorubin, possibly by CPUR_05423 and CPUR_05431. Clavorubin is the principal anthraquinone metabolite produced by the cluster with a much higher yield compared to endocrocin. This is Scytalone dehydratase-like protein CPUR_05428 from Claviceps purpurea (strain 20.1) (Ergot fungus).